A 222-amino-acid polypeptide reads, in one-letter code: UPF0502 protein XCC4136 (222 aa).

It belongs to the UPF0502 family.

The sequence is that of UPF0502 protein XCC4136 from Xanthomonas campestris pv. campestris (strain ATCC 33913 / DSM 3586 / NCPPB 528 / LMG 568 / P 25).